The following is a 488-amino-acid chain: Endoglucanase A (488 aa).

Residues histidine 59, 63-64 (WY), tyrosine 90, and histidine 125 each bind substrate. Glutamate 163 acts as the Proton donor in catalysis. Tyrosine 226 contributes to the substrate binding site. Residue glutamate 252 is the Nucleophile of the active site. Substrate contacts are provided by residues 258–259 (AT), tryptophan 286, and 291–293 (KDE). Disordered stretches follow at residues 326–362 (ESAS…AWDP) and 388–451 (EPGA…WDPT). 2 stretches are compositionally biased toward pro residues: residues 332–353 (PSDP…PPSD) and 405–416 (PSEPSDPPPPSE). Over residues 417–433 (PEPDPGEPDPGEPDPGE) the composition is skewed to acidic residues.

The protein belongs to the glycosyl hydrolase 5 (cellulase A) family.

The enzyme catalyses Endohydrolysis of (1-&gt;4)-beta-D-glucosidic linkages in cellulose, lichenin and cereal beta-D-glucans.. The polypeptide is Endoglucanase A (celA) (Evansella cellulosilytica (strain ATCC 21833 / DSM 2522 / FERM P-1141 / JCM 9156 / N-4) (Bacillus cellulosilyticus)).